A 217-amino-acid polypeptide reads, in one-letter code: Protein LURP-one-related 2 (217 aa).

This sequence belongs to the LOR family.

Its function is as follows. Might be related to the phospholipid scramblase and tubby-like superfamily of membrane tethered transcription factors. In Arabidopsis thaliana (Mouse-ear cress), this protein is Protein LURP-one-related 2.